The primary structure comprises 705 residues: Dynein axonemal intermediate chain 1 (705 aa).

Disordered stretches follow at residues 1 to 44 and 122 to 169; these read MPSK…AVRP and AGSQ…DVPA. Phosphoserine is present on residues serine 124 and serine 127. The span at 124 to 135 shows a compositional bias: polar residues; the sequence is SQESVKVVTSDT. Residues 136–159 are compositionally biased toward acidic residues; sequence EILEEEEEPKEGEGEGEGEAEGEA. WD repeat units follow at residues 386 to 426, 435 to 478, 543 to 583, 585 to 625, and 633 to 672; these read SSES…SQPC, KHTD…LVHI, AHNM…PMFI, DLNA…YEAI, and KKKN…RKMP.

Belongs to the dynein intermediate chain family. In terms of assembly, consists of at least two heavy chains and a number of intermediate and light chains. Interacts with BICD2. Interacts with CFAP45 and CFAP52. Interacts with CFAP53.

The protein resides in the cytoplasm. It is found in the cytoskeleton. The protein localises to the cilium axoneme. Functionally, part of the dynein complex of respiratory cilia. This chain is Dynein axonemal intermediate chain 1 (Dnai1), found in Rattus norvegicus (Rat).